A 424-amino-acid polypeptide reads, in one-letter code: UDP-N-acetylglucosamine 1-carboxyvinyltransferase 3 (424 aa).

22 to 23 serves as a coordination point for phosphoenolpyruvate; it reads KN. Arg94 contacts UDP-N-acetyl-alpha-D-glucosamine. The Proton donor role is filled by Asp118. UDP-N-acetyl-alpha-D-glucosamine contacts are provided by residues 123–127, Asp306, and Leu328; that span reads RPVDQ.

Belongs to the EPSP synthase family. MurA subfamily.

It is found in the cytoplasm. The enzyme catalyses phosphoenolpyruvate + UDP-N-acetyl-alpha-D-glucosamine = UDP-N-acetyl-3-O-(1-carboxyvinyl)-alpha-D-glucosamine + phosphate. Its pathway is cell wall biogenesis; peptidoglycan biosynthesis. Cell wall formation. Adds enolpyruvyl to UDP-N-acetylglucosamine. The polypeptide is UDP-N-acetylglucosamine 1-carboxyvinyltransferase 3 (Symbiobacterium thermophilum (strain DSM 24528 / JCM 14929 / IAM 14863 / T)).